Consider the following 651-residue polypeptide: ATP-dependent zinc metalloprotease FtsH (651 aa).

At 1–134 (MIVFATILFG…FTTDPQTAGP (134 aa)) the chain is on the extracellular side. Residues 135 to 155 (WARAIAVMAPFVLILLLFFLM) form a helical membrane-spanning segment. Topologically, residues 156–651 (TRTGRSASQS…PAMSVNGHRG (496 aa)) are cytoplasmic. Residue 229-236 (GPPGTGKT) coordinates ATP. His451 contacts Zn(2+). Glu452 is a catalytic residue. Zn(2+) is bound by residues His455 and Asp527.

It in the central section; belongs to the AAA ATPase family. This sequence in the C-terminal section; belongs to the peptidase M41 family. In terms of assembly, homohexamer. It depends on Zn(2+) as a cofactor.

It localises to the cell membrane. Acts as a processive, ATP-dependent zinc metallopeptidase for both cytoplasmic and membrane proteins. Plays a role in the quality control of integral membrane proteins. The sequence is that of ATP-dependent zinc metalloprotease FtsH from Rubrobacter xylanophilus (strain DSM 9941 / JCM 11954 / NBRC 16129 / PRD-1).